Reading from the N-terminus, the 120-residue chain is Large ribosomal subunit protein uL18 (120 aa).

Positions 1 to 24 are disordered; it reads MITKAAKNATRKKRHARVRAKLTG. Over residues 9–20 the composition is skewed to basic residues; the sequence is ATRKKRHARVRA.

It belongs to the universal ribosomal protein uL18 family. As to quaternary structure, part of the 50S ribosomal subunit; part of the 5S rRNA/L5/L18/L25 subcomplex. Contacts the 5S and 23S rRNAs.

In terms of biological role, this is one of the proteins that bind and probably mediate the attachment of the 5S RNA into the large ribosomal subunit, where it forms part of the central protuberance. The polypeptide is Large ribosomal subunit protein uL18 (Bacillus mycoides (strain KBAB4) (Bacillus weihenstephanensis)).